We begin with the raw amino-acid sequence, 297 residues long: ATP synthase F(1) complex subunit gamma, mitochondrial (297 aa).

The transit peptide at 1–25 (MFSRAGVAGLSAWTLQPQWIQVRNM) directs the protein to the mitochondrion. Lysine 39 bears the N6-acetyllysine mark. Lysine 49 is subject to N6-succinyllysine. An N6-acetyllysine modification is found at lysine 55. The residue at position 115 (lysine 115) is an N6-acetyllysine; alternate. Lysine 115 carries the N6-succinyllysine; alternate modification. Serine 146 is subject to Phosphoserine. Position 154 is an N6-acetyllysine; alternate (lysine 154). Lysine 154 bears the N6-succinyllysine; alternate mark. Lysine 197 carries the N6-acetyllysine modification. Lysine 270 carries the N6-succinyllysine modification.

It belongs to the ATPase gamma chain family. As to quaternary structure, component of the ATP synthase complex composed at least of ATP5F1A/subunit alpha, ATP5F1B/subunit beta, ATP5MC1/subunit c (homooctomer), MT-ATP6/subunit a, MT-ATP8/subunit 8, ATP5ME/subunit e, ATP5MF/subunit f, ATP5MG/subunit g, ATP5MK/subunit k, ATP5MJ/subunit j, ATP5F1C/subunit gamma, ATP5F1D/subunit delta, ATP5F1E/subunit epsilon, ATP5PF/subunit F6, ATP5PB/subunit b, ATP5PD/subunit d, ATP5PO/subunit OSCP. ATP synthase complex consists of a soluble F(1) head domain (subunits alpha(3) and beta(3)) - the catalytic core - and a membrane F(0) domain - the membrane proton channel (subunits c, a, 8, e, f, g, k and j). These two domains are linked by a central stalk (subunits gamma, delta, and epsilon) rotating inside the F1 region and a stationary peripheral stalk (subunits F6, b, d, and OSCP). Interacts with FLVCR2; this interaction occurs in the absence of heme and is disrupted upon heme binding.

Its subcellular location is the mitochondrion inner membrane. Functionally, subunit gamma, of the mitochondrial membrane ATP synthase complex (F(1)F(0) ATP synthase or Complex V) that produces ATP from ADP in the presence of a proton gradient across the membrane which is generated by electron transport complexes of the respiratory chain. ATP synthase complex consist of a soluble F(1) head domain - the catalytic core - and a membrane F(1) domain - the membrane proton channel. These two domains are linked by a central stalk rotating inside the F(1) region and a stationary peripheral stalk. During catalysis, ATP synthesis in the catalytic domain of F(1) is coupled via a rotary mechanism of the central stalk subunits to proton translocation. In vivo, can only synthesize ATP although its ATP hydrolase activity can be activated artificially in vitro. With the central stalk subunit delta, is essential for the biogenesis of F(1) catalytic part of the ATP synthase complex namely in the formation of F1 assembly intermediate. In Pongo abelii (Sumatran orangutan), this protein is ATP synthase F(1) complex subunit gamma, mitochondrial.